The sequence spans 299 residues: CRISPR system Cms protein Csm4 (299 aa).

This sequence belongs to the CRISPR-associated Csm4 family. In terms of assembly, part of the Csm effector complex that includes at least Cas10(1), Csm2(3), Csm3(5), Csm4(1), Csm5(1) and mature crRNA. The Csm complex is elongated and slightly twisted with a maximal length of 215 Angstroms and a diameter of 75-80 Angstroms. It has been modeled to have a central protein filamant of Csm3 subunits along which the dsRNA helix of paired crRNA and target RNA binds. The filament is capped at one end by Cas10 and Csm4 and at the other end by Csm5; ssDNA is thought to bind to the N-terminal HD domain of Cas10. Csm with a precursor crRNA does not include Csm5, while Cas6, the enzyme probably involved in pre-crRNA processing, is found associated with a subset of the Csm complex.

Functionally, CRISPR (clustered regularly interspaced short palindromic repeat) is an adaptive immune system that provides protection against mobile genetic elements (viruses, transposable elements and conjugative plasmids). CRISPR clusters contain spacers, sequences complementary to antecedent mobile elements, and target invading nucleic acids. CRISPR clusters are transcribed and processed into CRISPR RNA (crRNA). The type III-A Csm effector complex binds crRNA and acts as a crRNA-guided RNase, DNase and cyclic oligoadenylate synthase; binding of target RNA cognate to the crRNA is required for all activities. In a heterologous host this Csm effector complex restricts ssRNA phage MS2, suggesting it may target RNA viruses in vivo. Its function is as follows. Csm functions as a non-specific ssDNase. Base-pairing between crRNA and target RNA to form a ternary Csm complex activates a ssDNase activity; target RNA cleavage suppresses the ssDNase, a temporal control that prevents uncontrolled DNA degradation. Viral RNA transcripts probably tether the Csm complex to the viral genome, recruiting Cas10 ssDNA activity which is able to degrade DNA in the transcription bubble, spatially controlling the DNase activity. The subunit probably binds to the 5' handle of the crRNA, helping in discrimination between self- and non-self. The protein is CRISPR system Cms protein Csm4 of Streptococcus thermophilus.